Consider the following 192-residue polypeptide: Adenylate kinase (192 aa).

11 to 16 (GSGKGT) contributes to the ATP binding site. Residues 31–60 (STGDIFRANVKGETPLGIEAKKYMDNGDFV) are NMP. Residues Thr-32, Arg-37, 58 to 60 (DFV), 86 to 89 (GYPR), and Gln-93 each bind AMP. Positions 127-137 (GRAKETGRSDD) are LID. Arg-128 provides a ligand contact to ATP. Positions 134 and 145 each coordinate AMP. Gly-173 provides a ligand contact to ATP.

It belongs to the adenylate kinase family. As to quaternary structure, monomer.

Its subcellular location is the cytoplasm. The enzyme catalyses AMP + ATP = 2 ADP. It functions in the pathway purine metabolism; AMP biosynthesis via salvage pathway; AMP from ADP: step 1/1. In terms of biological role, catalyzes the reversible transfer of the terminal phosphate group between ATP and AMP. Plays an important role in cellular energy homeostasis and in adenine nucleotide metabolism. The protein is Adenylate kinase of Pseudarthrobacter chlorophenolicus (strain ATCC 700700 / DSM 12829 / CIP 107037 / JCM 12360 / KCTC 9906 / NCIMB 13794 / A6) (Arthrobacter chlorophenolicus).